We begin with the raw amino-acid sequence, 277 residues long: Urease accessory protein UreD (277 aa).

Positions 1–20 (MRQTAQEDASPAPMQRAHGT) are disordered.

It belongs to the UreD family. As to quaternary structure, ureD, UreF and UreG form a complex that acts as a GTP-hydrolysis-dependent molecular chaperone, activating the urease apoprotein by helping to assemble the nickel containing metallocenter of UreC. The UreE protein probably delivers the nickel.

It is found in the cytoplasm. Functionally, required for maturation of urease via the functional incorporation of the urease nickel metallocenter. The chain is Urease accessory protein UreD from Chelativorans sp. (strain BNC1).